A 130-amino-acid chain; its full sequence is Small ribosomal subunit protein uS11c (130 aa).

The protein belongs to the universal ribosomal protein uS11 family. Part of the 30S ribosomal subunit.

It is found in the plastid. The protein localises to the chloroplast. In Tetradesmus obliquus (Green alga), this protein is Small ribosomal subunit protein uS11c.